We begin with the raw amino-acid sequence, 353 residues long: Phosphate acyltransferase (353 aa).

Belongs to the PlsX family. In terms of assembly, homodimer. Probably interacts with PlsY.

It localises to the cytoplasm. The catalysed reaction is a fatty acyl-[ACP] + phosphate = an acyl phosphate + holo-[ACP]. It functions in the pathway lipid metabolism; phospholipid metabolism. In terms of biological role, catalyzes the reversible formation of acyl-phosphate (acyl-PO(4)) from acyl-[acyl-carrier-protein] (acyl-ACP). This enzyme utilizes acyl-ACP as fatty acyl donor, but not acyl-CoA. In Ralstonia pickettii (strain 12J), this protein is Phosphate acyltransferase.